We begin with the raw amino-acid sequence, 244 residues long: 1-(5-phosphoribosyl)-5-[(5-phosphoribosylamino)methylideneamino] imidazole-4-carboxamide isomerase (244 aa).

The active-site Proton acceptor is the aspartate 7. Aspartate 129 (proton donor) is an active-site residue.

It belongs to the HisA/HisF family.

Its subcellular location is the cytoplasm. It carries out the reaction 1-(5-phospho-beta-D-ribosyl)-5-[(5-phospho-beta-D-ribosylamino)methylideneamino]imidazole-4-carboxamide = 5-[(5-phospho-1-deoxy-D-ribulos-1-ylimino)methylamino]-1-(5-phospho-beta-D-ribosyl)imidazole-4-carboxamide. Its pathway is amino-acid biosynthesis; L-histidine biosynthesis; L-histidine from 5-phospho-alpha-D-ribose 1-diphosphate: step 4/9. The sequence is that of 1-(5-phosphoribosyl)-5-[(5-phosphoribosylamino)methylideneamino] imidazole-4-carboxamide isomerase from Pseudoalteromonas atlantica (strain T6c / ATCC BAA-1087).